A 289-amino-acid polypeptide reads, in one-letter code: dTDP-rhamnosyl transferase RfbG (289 aa).

This sequence belongs to the glycosyltransferase 2 family.

It participates in bacterial outer membrane biogenesis; lipopolysaccharide biosynthesis. The sequence is that of dTDP-rhamnosyl transferase RfbG (rfbG) from Shigella flexneri.